Reading from the N-terminus, the 87-residue chain is Precursor of CEP8 (87 aa).

An N-terminal signal peptide occupies residues 1–29 (MAKALFFNFCISLLIIAILVSHEIIPTEA). The propeptide occupies 30 to 72 (RHLRTHRKSIKNSTLTVHEGAGGLRTGGGSVKTDISKEEHGVD). Asn41 carries an N-linked (GlcNAc...) asparagine glycan. Residues 41 to 87 (NSTLTVHEGAGGLRTGGGSVKTDISKEEHGVDEFRPTTPGNSPGIGH) form a disordered region. The span at 49-59 (GAGGLRTGGGS) shows a compositional bias: gly residues. The span at 63-75 (DISKEEHGVDEFR) shows a compositional bias: basic and acidic residues. A hydroxyproline mark is found at Pro76, Pro79, and Pro83.

The protein belongs to the C-terminally encoded plant signaling peptide (CEP) family. Interacts with CEP receptors (e.g. CEPR1 and CEPR2). The mature small signaling peptide is generated by proteolytic processing of the longer precursor. Expressed in lateral root primordia and in lateral roots excluding the meristem region. Also present in the aerial tissues, such as leaf petioles and the shoot apex region.

It localises to the secreted. It is found in the extracellular space. The protein resides in the apoplast. Extracellular signaling peptide that may regulate primary root growth rate and systemic nitrogen (N)-demand signaling. Mediates up-regulation of genes involved in N uptake and assimilation pathways. In Arabidopsis thaliana (Mouse-ear cress), this protein is Precursor of CEP8.